A 346-amino-acid polypeptide reads, in one-letter code: Secreted frizzled-related protein 4 (346 aa).

A signal peptide spans 1–18 (MFLSILVALCLWLHLALG). The 121-residue stretch at 19-139 (VRGAPCEAVR…VYDRGVCISP (121 aa)) folds into the FZ domain. 5 disulfides stabilise this stretch: Cys24-Cys85, Cys32-Cys78, Cys69-Cys108, Cys97-Cys136, and Cys101-Cys125. Residues Asn38 and Asn68 are each glycosylated (N-linked (GlcNAc...) asparagine). 3 N-linked (GlcNAc...) asparagine glycosylation sites follow: Asn116, Asn194, and Asn240. The NTR domain maps to 178 to 307 (CKCKKVKPTL…IQDKKKTAGR (130 aa)). A compositionally biased stretch (basic and acidic residues) spans 294-303 (QRRTIQDKKK). The tract at residues 294-346 (QRRTIQDKKKTAGRTSRSNPPKPKGKPPAPKPASPKKNIKTRSAQKKTNPKKV) is disordered. Over residues 313–326 (PPKPKGKPPAPKPA) the composition is skewed to pro residues. Basic residues predominate over residues 330-346 (KNIKTRSAQKKTNPKKV).

It belongs to the secreted frizzled-related protein (sFRP) family.

The protein resides in the secreted. Functionally, soluble frizzled-related proteins (sFRPS) function as modulators of Wnt signaling through direct interaction with Wnts. They have a role in regulating cell growth and differentiation in specific cell types. SFRP4 plays a role in bone morphogenesis. May also act as a regulator of adult uterine morphology and function. May also increase apoptosis during ovulation possibly through modulation of FZ1/FZ4/WNT4 signaling. Has phosphaturic effects by specifically inhibiting sodium-dependent phosphate uptake. This is Secreted frizzled-related protein 4 (SFRP4) from Macaca mulatta (Rhesus macaque).